Here is a 122-residue protein sequence, read N- to C-terminus: Ribosome-binding factor A (122 aa).

It belongs to the RbfA family. In terms of assembly, monomer. Binds 30S ribosomal subunits, but not 50S ribosomal subunits or 70S ribosomes.

Its subcellular location is the cytoplasm. In terms of biological role, one of several proteins that assist in the late maturation steps of the functional core of the 30S ribosomal subunit. Associates with free 30S ribosomal subunits (but not with 30S subunits that are part of 70S ribosomes or polysomes). Required for efficient processing of 16S rRNA. May interact with the 5'-terminal helix region of 16S rRNA. The sequence is that of Ribosome-binding factor A from Burkholderia mallei (strain NCTC 10229).